Reading from the N-terminus, the 245-residue chain is Serine/arginine-rich splicing factor 1B (245 aa).

Residues 15–90 (CRIYVGNLPP…YRLRVEFPRS (76 aa)) enclose the RRM 1 domain. Disordered stretches follow at residues 89–116 (RSGR…PPSR) and 192–245 (KVDG…RSRT). Residues 91–106 (GRGGGRGGGGGGGVGA) are compositionally biased toward gly residues. The 75-residue stretch at 120–194 (YRVIVSGLPP…ETAYIRVKVD (75 aa)) folds into the RRM 2 domain. Basic residues predominate over residues 204 to 245 (SRSRSRSRSRSRSNSRSRSYSPRRSRGSPRYSPRHSRSRSRT).

The protein belongs to the splicing factor SR family.

The protein resides in the cytoplasm. It is found in the nucleus speckle. May play a role in preventing exon skipping, ensuring the accuracy of splicing and regulating alternative splicing. In Danio rerio (Zebrafish), this protein is Serine/arginine-rich splicing factor 1B (srsf1b).